Reading from the N-terminus, the 366-residue chain is Tyrosyl-DNA phosphodiesterase 2 (366 aa).

At M1 the chain carries N-acetylmethionine. The segment covering 1–22 (MASGSSSDAAESAEPAAAPAAA) has biased composition (low complexity). The interval 1–30 (MASGSSSDAAESAEPAAAPAAAETEEDQVK) is disordered. K30 is covalently cross-linked (Glycyl lysine isopeptide (Lys-Gly) (interchain with G-Cter in SUMO2)). A Phosphothreonine; by ACVR1B modification is found at T95. The interval 126 to 130 (NIDGL) is interaction with 5' end of substrate DNA. Mg(2+)-binding residues include D128 and E158. Residues 232-237 (HLESTR) are interaction with 5' end of substrate DNA. D268 acts as the Proton donor/acceptor in catalysis. Positions 270–272 (NLR) are interaction with 5' end of substrate DNA.

It belongs to the CCR4/nocturin family. In terms of assembly, interacts with TRAF2, TRAF3, TRAF5, TRAF6, TNFRSF8/CD30, TNFRSF5/CD40, TNFRSF1B/TNF-R75, ETS1, ETS2, FLI1, SMAD3 and ACVR1B/ALK4. Requires Mg(2+) as cofactor. Mn(2+) is required as a cofactor. Ubiquitinated by TRAF6.

Its subcellular location is the nucleus. It is found in the PML body. The protein localises to the nucleolus. The protein resides in the cytoplasm. DNA repair enzyme that can remove a variety of covalent adducts from DNA through hydrolysis of a 5'-phosphodiester bond, giving rise to DNA with a free 5' phosphate. Catalyzes the hydrolysis of dead-end complexes between DNA and the topoisomerase 2 (TOP2) active site tyrosine residue. The 5'-tyrosyl DNA phosphodiesterase activity can enable the repair of TOP2-induced DNA double-strand breaks/DSBs without the need for nuclease activity, creating a 'clean' DSB with 5'-phosphate termini that are ready for ligation. Thereby, protects the transcription of many genes involved in neurological development and maintenance from the abortive activity of TOP2. Hydrolyzes 5'-phosphoglycolates on protruding 5' ends on DSBs due to DNA damage by radiation and free radicals. Has preference for single-stranded DNA or duplex DNA with a 4 base pair overhang as substrate. Also has 3'-tyrosyl DNA phosphodiesterase activity, but less efficiently and much slower than TDP1. Constitutes the major if not only 5'-tyrosyl-DNA phosphodiesterase in cells. Also acts as an adapter by participating in the specific activation of MAP3K7/TAK1 in response to TGF-beta: associates with components of the TGF-beta receptor-TRAF6-TAK1 signaling module and promotes their ubiquitination dependent complex formation. Involved in non-canonical TGF-beta induced signaling routes. May also act as a negative regulator of ETS1 and may inhibit NF-kappa-B activation. Acts as a regulator of ribosome biogenesis following stress. In Rattus norvegicus (Rat), this protein is Tyrosyl-DNA phosphodiesterase 2 (Tdp2).